Consider the following 465-residue polypeptide: Protein hedgehog (465 aa).

C79 is lipidated: N-palmitoyl cysteine. Ca(2+) is bound by residues E143, E144, D149, T179, E180, D183, and D185. The Cholesterol glycine ester moiety is linked to residue G251.

It belongs to the hedgehog family. Interacts with shf. The C-terminal part of the hedgehog protein precursor displays an autoproteolysis activity that results in the cleavage of the full-length protein into two parts (N-product and C-product). In addition, the C-terminal part displays a cholesterol transferase activity that results by the covalent attachment of a cholesterol moiety to the C-terminal of the newly generated N-product. The N-product is the active species in both local and long-range signaling, whereas the C-product has no signaling activity. Post-translationally, cholesterylation is required for N-product targeting to lipid rafts and multimerization. In terms of processing, N-palmitoylation by Rasp of the hedgehog N-product, within the secretory pathway, is required for the embryonic and larval patterning activities of the hedgehog signal.

The protein resides in the nucleus. It localises to the cytoplasm. The protein localises to the cell membrane. The catalysed reaction is glycyl-L-cysteinyl-[protein] + cholesterol + H(+) = [protein]-C-terminal glycyl cholesterol ester + N-terminal L-cysteinyl-[protein]. In terms of biological role, the C-terminal part of the hedgehog protein precursor displays an autoproteolysis activity that results in the cleavage of the full-length protein into two parts (N-product and C-product). In addition, the C-terminal part displays a cholesterol transferase activity that results by the covalent attachment of a cholesterol moiety to the C-terminal of the newly generated N-product. Once cleaved, the C-product has no signaling activity and diffuses from the cell. Functionally, the dually lipidated hedgehog protein N-product is a morphogen which is essential for a variety of patterning events during development. Establishes the anterior-posterior axis of the embryonic segments and patterns the larval imaginal disks. Binds to the patched (ptc) receptor, which functions in association with smoothened (smo), to activate the transcription of target genes wingless (wg), decapentaplegic (dpp) and ptc. In the absence of hh, ptc represses the constitutive signaling activity of smo through fused (fu). Essential component of a signaling pathway which regulates the Duox-dependent gut immune response to bacterial uracil; required to activate Cad99C-dependent endosome formation, norpA-dependent Ca2+ mobilization and p38 MAPK, which are essential steps in the Duox-dependent production of reactive oxygen species (ROS) in response to intestinal bacterial infection. During photoreceptor differentiation, it up-regulates transcription of Ubr3, which in turn promotes the hh-signaling pathway by mediating the ubiquitination and degradation of cos. This Drosophila sechellia (Fruit fly) protein is Protein hedgehog.